We begin with the raw amino-acid sequence, 171 residues long: Neuronal vesicle trafficking-associated protein 2 (171 aa).

The interval Met1–Gly21 is disordered. Topologically, residues Met1–Thr71 are cytoplasmic. The helical; Signal-anchor for type II membrane protein transmembrane segment at Val72–Tyr92 threads the bilayer. At Lys93–His171 the chain is on the lumenal side.

Belongs to the NSG family. As to expression, specifically expressed in neural and neuroendocrine tissues. Pituitary and less in adrenal gland and testis. Expressed in the hippocampus throughout development. Remains enriched in layer V cortical neurons during development. At P0, broadly expressed in the neocortex. Is down-regulated overall at P8 and P14, but remains relatively enriched in layer V. At P0 is lower expressed in the cerebellum. Expression remains low throughout development, and is undetectable by adulthood.

The protein localises to the membrane. The protein resides in the golgi apparatus. Its subcellular location is the trans-Golgi network membrane. It localises to the cell projection. It is found in the dendrite. The protein localises to the endosome membrane. The protein resides in the early endosome membrane. Its subcellular location is the late endosome membrane. It localises to the lysosome lumen. It is found in the cytoplasmic vesicle membrane. The protein localises to the golgi stack membrane. The protein resides in the endosome. Its subcellular location is the multivesicular body membrane. The polypeptide is Neuronal vesicle trafficking-associated protein 2 (Mus musculus (Mouse)).